A 303-amino-acid chain; its full sequence is UDP-N-acetylenolpyruvoylglucosamine reductase (303 aa).

The 166-residue stretch at 23–188 (KVGGPADYLV…ISAKFALKPG (166 aa)) folds into the FAD-binding PCMH-type domain. Arg-167 is an active-site residue. The active-site Proton donor is Ser-217. Glu-287 is an active-site residue.

It belongs to the MurB family. Requires FAD as cofactor.

Its subcellular location is the cytoplasm. The enzyme catalyses UDP-N-acetyl-alpha-D-muramate + NADP(+) = UDP-N-acetyl-3-O-(1-carboxyvinyl)-alpha-D-glucosamine + NADPH + H(+). The protein operates within cell wall biogenesis; peptidoglycan biosynthesis. In terms of biological role, cell wall formation. The polypeptide is UDP-N-acetylenolpyruvoylglucosamine reductase (Streptococcus uberis (strain ATCC BAA-854 / 0140J)).